Consider the following 297-residue polypeptide: 4-hydroxy-tetrahydrodipicolinate synthase (297 aa).

Position 51 (Thr-51) interacts with pyruvate. The active-site Proton donor/acceptor is Tyr-139. Residue Lys-167 is the Schiff-base intermediate with substrate of the active site. Pyruvate is bound at residue Val-209.

It belongs to the DapA family. In terms of assembly, homotetramer; dimer of dimers.

The protein resides in the cytoplasm. It carries out the reaction L-aspartate 4-semialdehyde + pyruvate = (2S,4S)-4-hydroxy-2,3,4,5-tetrahydrodipicolinate + H2O + H(+). Its pathway is amino-acid biosynthesis; L-lysine biosynthesis via DAP pathway; (S)-tetrahydrodipicolinate from L-aspartate: step 3/4. In terms of biological role, catalyzes the condensation of (S)-aspartate-beta-semialdehyde [(S)-ASA] and pyruvate to 4-hydroxy-tetrahydrodipicolinate (HTPA). This chain is 4-hydroxy-tetrahydrodipicolinate synthase, found in Albidiferax ferrireducens (strain ATCC BAA-621 / DSM 15236 / T118) (Rhodoferax ferrireducens).